Reading from the N-terminus, the 142-residue chain is Photosystem II extrinsic protein U (142 aa).

The first 29 residues, 1 to 29 (MKGLVRLLTVFSLLLGCWGWLGTTQIAQA), serve as a signal peptide directing secretion.

Belongs to the PsbU family. In terms of assembly, PSII is composed of 1 copy each of membrane proteins PsbA, PsbB, PsbC, PsbD, PsbE, PsbF, PsbH, PsbI, PsbJ, PsbK, PsbL, PsbM, PsbT, PsbX, PsbY, PsbZ, Psb30/Ycf12, peripheral proteins PsbO, CyanoQ (PsbQ), PsbU, PsbV and a large number of cofactors. It forms dimeric complexes.

The protein localises to the cellular thylakoid membrane. Its function is as follows. One of the extrinsic, lumenal subunits of photosystem II (PSII). PSII is a light-driven water plastoquinone oxidoreductase, using light energy to abstract electrons from H(2)O, generating a proton gradient subsequently used for ATP formation. The extrinsic proteins stabilize the structure of photosystem II oxygen-evolving complex (OEC), the ion environment of oxygen evolution and protect the OEC against heat-induced inactivation. The polypeptide is Photosystem II extrinsic protein U (Nostoc sp. (strain PCC 7120 / SAG 25.82 / UTEX 2576)).